We begin with the raw amino-acid sequence, 227 residues long: Cytochrome c oxidase subunit 2 (227 aa).

At 1–14 the chain is on the mitochondrial intermembrane side; the sequence is MAYPFQLGLQDATS. The helical transmembrane segment at 15–45 threads the bilayer; the sequence is PIMEELLHFHDHTLMIVFLISSLVLYIISLM. Topologically, residues 46-59 are mitochondrial matrix; it reads LTTKLTHTSTMDAQ. The helical transmembrane segment at 60–87 threads the bilayer; the sequence is EVETVWTILPAIILVLIALPSLRILYMM. Residues 88-227 lie on the Mitochondrial intermembrane side of the membrane; sequence DEINNPSLTV…YFETWSALMV (140 aa). Cu cation is bound by residues His-161, Cys-196, Glu-198, Cys-200, His-204, and Met-207. Glu-198 lines the Mg(2+) pocket. A Phosphotyrosine modification is found at Tyr-218.

Belongs to the cytochrome c oxidase subunit 2 family. As to quaternary structure, component of the cytochrome c oxidase (complex IV, CIV), a multisubunit enzyme composed of 14 subunits. The complex is composed of a catalytic core of 3 subunits MT-CO1, MT-CO2 and MT-CO3, encoded in the mitochondrial DNA, and 11 supernumerary subunits COX4I, COX5A, COX5B, COX6A, COX6B, COX6C, COX7A, COX7B, COX7C, COX8 and NDUFA4, which are encoded in the nuclear genome. The complex exists as a monomer or a dimer and forms supercomplexes (SCs) in the inner mitochondrial membrane with NADH-ubiquinone oxidoreductase (complex I, CI) and ubiquinol-cytochrome c oxidoreductase (cytochrome b-c1 complex, complex III, CIII), resulting in different assemblies (supercomplex SCI(1)III(2)IV(1) and megacomplex MCI(2)III(2)IV(2)). Found in a complex with TMEM177, COA6, COX18, COX20, SCO1 and SCO2. Interacts with TMEM177 in a COX20-dependent manner. Interacts with COX20. Interacts with COX16. Cu cation is required as a cofactor.

Its subcellular location is the mitochondrion inner membrane. It catalyses the reaction 4 Fe(II)-[cytochrome c] + O2 + 8 H(+)(in) = 4 Fe(III)-[cytochrome c] + 2 H2O + 4 H(+)(out). In terms of biological role, component of the cytochrome c oxidase, the last enzyme in the mitochondrial electron transport chain which drives oxidative phosphorylation. The respiratory chain contains 3 multisubunit complexes succinate dehydrogenase (complex II, CII), ubiquinol-cytochrome c oxidoreductase (cytochrome b-c1 complex, complex III, CIII) and cytochrome c oxidase (complex IV, CIV), that cooperate to transfer electrons derived from NADH and succinate to molecular oxygen, creating an electrochemical gradient over the inner membrane that drives transmembrane transport and the ATP synthase. Cytochrome c oxidase is the component of the respiratory chain that catalyzes the reduction of oxygen to water. Electrons originating from reduced cytochrome c in the intermembrane space (IMS) are transferred via the dinuclear copper A center (CU(A)) of subunit 2 and heme A of subunit 1 to the active site in subunit 1, a binuclear center (BNC) formed by heme A3 and copper B (CU(B)). The BNC reduces molecular oxygen to 2 water molecules using 4 electrons from cytochrome c in the IMS and 4 protons from the mitochondrial matrix. This Cerdocyon thous (Crab-eating fox) protein is Cytochrome c oxidase subunit 2 (MT-CO2).